A 343-amino-acid chain; its full sequence is Mitochondrial import inner membrane translocase subunit TIM50-A (343 aa).

The Mitochondrial matrix segment spans residues 1 to 57 (MHKIVWFGTLNKSIGYIGKKKTCLLSPCEKICLNSARKTVQRCDKNYSPPKLRRIKN). The chain crosses the membrane as a helical span at residues 58–77 (FYTYSVVLGSLFSIVMWAIY). The Mitochondrial intermembrane portion of the chain corresponds to 78–343 (KLGKPEEDHR…GRSLRGSSIK (266 aa)). In terms of domain architecture, FCP1 homology spans 135 to 278 (YIQPPYSLVL…FDLTAFLQLI (144 aa)).

It belongs to the TIM50 family. As to quaternary structure, component of the TIM23 complex at least composed of Tim23, Tim17 (Tim17a1, Tim17a2 or Tim17b1) and a Tim50. As to expression, exclusively expressed in the testis.

Its subcellular location is the mitochondrion inner membrane. Functionally, essential component of the TIM23 complex, a complex that mediates the translocation of transit peptide-containing proteins across the mitochondrial inner membrane. The protein is Mitochondrial import inner membrane translocase subunit TIM50-A (ttm3) of Drosophila melanogaster (Fruit fly).